Here is a 193-residue protein sequence, read N- to C-terminus: MGVAQSNTTLVAPQPKGIIDPATGKPVGSNDPFFGEINNELADKGFLVTSTDELINWARTGSLMWMTFGLACCAVEMMQVSMPRYDVERFGFAPRASPRQSDVMIVAGTLTNKMAPALRKVYDQMPEPRYVISMGSCANGGGYYHYSYSVVRGCDRIVPIDIYIPGCPPTAEALLYGVLLLQKKIRRTGTIER.

Positions 72, 73, 137, and 167 each coordinate [4Fe-4S] cluster.

The protein belongs to the complex I 20 kDa subunit family. In terms of assembly, NDH-1 is composed of 14 different subunits. Subunits NuoB, C, D, E, F, and G constitute the peripheral sector of the complex. Requires [4Fe-4S] cluster as cofactor.

It is found in the cell inner membrane. The catalysed reaction is a quinone + NADH + 5 H(+)(in) = a quinol + NAD(+) + 4 H(+)(out). NDH-1 shuttles electrons from NADH, via FMN and iron-sulfur (Fe-S) centers, to quinones in the respiratory chain. The immediate electron acceptor for the enzyme in this species is believed to be ubiquinone. Couples the redox reaction to proton translocation (for every two electrons transferred, four hydrogen ions are translocated across the cytoplasmic membrane), and thus conserves the redox energy in a proton gradient. The polypeptide is NADH-quinone oxidoreductase subunit B (Rhizobium rhizogenes (strain K84 / ATCC BAA-868) (Agrobacterium radiobacter)).